The primary structure comprises 51 residues: Sperm protamine P1 (51 aa).

The segment covering 1 to 13 (MARYRCCRSQSRS) has biased composition (low complexity). Positions 1–30 (MARYRCCRSQSRSRYYRQRQRSRRRRRRSC) are disordered. Residues 14-30 (RYYRQRQRSRRRRRRSC) are compositionally biased toward basic residues. Cys-40 and Cys-48 are disulfide-bonded.

Belongs to the protamine P1 family. In terms of assembly, cross-linked by interchain disulfide bonds around the DNA-helix. In terms of processing, phosphorylated by SRPK1. As to expression, testis.

The protein resides in the nucleus. The protein localises to the chromosome. Its function is as follows. Protamines substitute for histones in the chromatin of sperm during the haploid phase of spermatogenesis. They compact sperm DNA into a highly condensed, stable and inactive complex. The chain is Sperm protamine P1 (PRM1) from Homo sapiens (Human).